The following is a 140-amino-acid chain: Large ribosomal subunit protein bL17 (140 aa).

Belongs to the bacterial ribosomal protein bL17 family. Part of the 50S ribosomal subunit. Contacts protein L32.

The chain is Large ribosomal subunit protein bL17 from Beijerinckia indica subsp. indica (strain ATCC 9039 / DSM 1715 / NCIMB 8712).